We begin with the raw amino-acid sequence, 729 residues long: Fatty acid oxidation complex subunit alpha (729 aa).

The enoyl-CoA hydratase/isomerase stretch occupies residues 1 to 189; the sequence is MLYKGDTLYL…KIGLVDGVVK (189 aa). D296 is a binding site for substrate. The tract at residues 311–729 is 3-hydroxyacyl-CoA dehydrogenase; it reads ETPKQAAVLG…ARPVGDLKTA (419 aa). Residues M324, D343, 400–402, K407, and S429 contribute to the NAD(+) site; that span reads IVE. H450 functions as the For 3-hydroxyacyl-CoA dehydrogenase activity in the catalytic mechanism. An NAD(+)-binding site is contributed by N453. Residues N500 and Y660 each coordinate substrate. Positions 708–729 are disordered; that stretch reads RHNEPYYPPVEPARPVGDLKTA.

The protein in the N-terminal section; belongs to the enoyl-CoA hydratase/isomerase family. It in the C-terminal section; belongs to the 3-hydroxyacyl-CoA dehydrogenase family. As to quaternary structure, heterotetramer of two alpha chains (FadB) and two beta chains (FadA).

The catalysed reaction is a (3S)-3-hydroxyacyl-CoA + NAD(+) = a 3-oxoacyl-CoA + NADH + H(+). It carries out the reaction a (3S)-3-hydroxyacyl-CoA = a (2E)-enoyl-CoA + H2O. The enzyme catalyses a 4-saturated-(3S)-3-hydroxyacyl-CoA = a (3E)-enoyl-CoA + H2O. It catalyses the reaction (3S)-3-hydroxybutanoyl-CoA = (3R)-3-hydroxybutanoyl-CoA. The catalysed reaction is a (3Z)-enoyl-CoA = a 4-saturated (2E)-enoyl-CoA. It carries out the reaction a (3E)-enoyl-CoA = a 4-saturated (2E)-enoyl-CoA. It functions in the pathway lipid metabolism; fatty acid beta-oxidation. Involved in the aerobic and anaerobic degradation of long-chain fatty acids via beta-oxidation cycle. Catalyzes the formation of 3-oxoacyl-CoA from enoyl-CoA via L-3-hydroxyacyl-CoA. It can also use D-3-hydroxyacyl-CoA and cis-3-enoyl-CoA as substrate. The polypeptide is Fatty acid oxidation complex subunit alpha (Escherichia coli O157:H7).